Here is a 30-residue protein sequence, read N- to C-terminus: Dendrotoxin A (30 aa).

Cys3 and Cys22 form a disulfide bridge.

The protein belongs to the three-finger toxin family. Short-chain subfamily. Acn-esterase inhibitor sub-subfamily. In terms of processing, contains 4 disulfide bonds. In terms of tissue distribution, expressed by the venom gland.

It is found in the secreted. Inhibits acetylcholinesterase. Has been described to inhibit both the slowly and the rapidly inactivating phases of potassium efflux. In Dendroaspis angusticeps (Eastern green mamba), this protein is Dendrotoxin A.